Reading from the N-terminus, the 266-residue chain is Ubiquinone biosynthesis protein COQ4 homolog, mitochondrial (266 aa).

Residues histidine 169, aspartate 170, histidine 173, and glutamate 185 each coordinate Zn(2+).

This sequence belongs to the COQ4 family. In terms of assembly, component of a multi-subunit COQ enzyme complex. It depends on Zn(2+) as a cofactor.

It localises to the mitochondrion inner membrane. The enzyme catalyses a 4-hydroxy-3-methoxy-5-(all-trans-polyprenyl)benzoate + H(+) = a 2-methoxy-6-(all-trans-polyprenyl)phenol + CO2. It functions in the pathway cofactor biosynthesis; ubiquinone biosynthesis. In terms of biological role, lyase that catalyzes the C1-decarboxylation of 4-hydroxy-3-methoxy-5-(all-trans-polyprenyl)benzoic acid into 2-methoxy-6-(all-trans-polyprenyl)phenol during ubiquinone biosynthesis. In Drosophila ananassae (Fruit fly), this protein is Ubiquinone biosynthesis protein COQ4 homolog, mitochondrial.